Consider the following 364-residue polypeptide: Chorismate synthase (364 aa).

Arg47 is a binding site for NADP(+). FMN contacts are provided by residues 125–127 (RFS), Gly285, 300–304 (KPTPS), and Arg327.

This sequence belongs to the chorismate synthase family. Homotetramer. The cofactor is FMNH2.

The catalysed reaction is 5-O-(1-carboxyvinyl)-3-phosphoshikimate = chorismate + phosphate. Its pathway is metabolic intermediate biosynthesis; chorismate biosynthesis; chorismate from D-erythrose 4-phosphate and phosphoenolpyruvate: step 7/7. Catalyzes the anti-1,4-elimination of the C-3 phosphate and the C-6 proR hydrogen from 5-enolpyruvylshikimate-3-phosphate (EPSP) to yield chorismate, which is the branch point compound that serves as the starting substrate for the three terminal pathways of aromatic amino acid biosynthesis. This reaction introduces a second double bond into the aromatic ring system. In Dehalococcoides mccartyi (strain ATCC BAA-2266 / KCTC 15142 / 195) (Dehalococcoides ethenogenes (strain 195)), this protein is Chorismate synthase.